The chain runs to 1102 residues: WD repeat-containing protein 72 (1102 aa).

WD repeat units follow at residues 15–54 (APPHSITAIMITDDQRTIVTGSQEGQLCLWNLSHELKISA), 60–102 (GHSA…CMEK), 160–197 (NCMCIVHSMRIQEDSLLVVSVAGELKVWDLSSSINSIQ), 318–362 (KEQS…VSKF), 402–441 (AGTAVVTSSEYIPSLDKLICGCEDGTIIITQALNAAKARL), 459–504 (GHHQ…ILHK), 507–552 (LEAG…CLLH), and 555–594 (KHLFPVRMIKWHPVENFLIVGCADDSVYIWEIETGTLERH). A phosphoserine mark is found at Ser-1081 and Ser-1083.

It is found in the cytoplasmic vesicle. In terms of biological role, plays a major role in formation of tooth enamel. Specifically required during the maturation phase of amelogenesis for normal formation of the enamel matrix and clearance of enamel proteins. May be involved in localization of the calcium transporter SLC24A4 to the ameloblast cell membrane. The chain is WD repeat-containing protein 72 (WDR72) from Homo sapiens (Human).